The chain runs to 909 residues: Epithelial discoidin domain-containing receptor 1 (909 aa).

The N-terminal stretch at 1–18 (MGPEALSSLLLLLLVASG) is a signal peptide. Residues 21 to 413 (DMKGHFDPAK…VAKAEGSPTA (393 aa)) lie on the Extracellular side of the membrane. Residues 31-181 (CRYALGMQDR…VCLRVELYGC (151 aa)) form the F5/8 type C domain. Intrachain disulfides connect Cys-31-Cys-181 and Cys-70-Cys-173. Residues 45–60 (SDISASSSWSDSTAAR) show a composition bias toward low complexity. Positions 45 to 65 (SDISASSSWSDSTAARHSSDG) are disordered. The segment at 188 to 363 (LSYTAPVGQT…LFSEISFISD (176 aa)) is DS-like domain. Ca(2+) contacts are provided by Asn-207, Gln-226, Asp-229, Val-231, Tyr-249, and Tyr-251. Asn-207 carries N-linked (GlcNAc...) asparagine glycosylation. N-linked (GlcNAc...) asparagine glycosylation is present at Asn-256. Cys-299 and Cys-344 are joined by a disulfide. The Ca(2+) site is built by Ser-356 and Glu-357. N-linked (GlcNAc...) asparagine glycosylation is found at Asn-366 and Asn-390. Residues 414-434 (ILIGCLVAIILLLLLIIALML) traverse the membrane as a helical segment. At 435 to 909 (WRLHWRRLLS…FLAEDALNTV (475 aa)) the chain is on the cytoplasmic side. The tract at residues 466 to 495 (ILINNRPGPREPPPYQEPRPRGNPPHSAPC) is disordered. The span at 475–492 (REPPPYQEPRPRGNPPHS) shows a compositional bias: pro residues. The short motif at 477 to 480 (PPPY) is the PPxY motif element. Phosphotyrosine; by autocatalysis occurs at positions 480, 509, and 516. The region spanning 606 to 901 (LRFKEKLGEG…PPFSQLHRFL (296 aa)) is the Protein kinase domain. An ATP-binding site is contributed by 612 to 620 (LGEGQFGEV). Ser-627 carries the post-translational modification Phosphoserine. ATP is bound at residue Lys-651. Tyr-736 is subject to Phosphotyrosine; by autocatalysis. Catalysis depends on Asp-762, which acts as the Proton acceptor. Phosphotyrosine; by autocatalysis is present on residues Tyr-788, Tyr-792, and Tyr-793.

It belongs to the protein kinase superfamily. Tyr protein kinase family. Insulin receptor subfamily. Homodimer. Interacts (via PPxY motif) with WWC1 (via WW domains) in a collagen-regulated manner. Forms a tripartite complex with WWC1 and PRKCZ, but predominantly in the absence of collagen. Interacts (tyrosine phosphorylated) with SHC1. Interacts with SRC. Interacts with MYH9. Interacts with CDH1. Interacts with PTPN11. Interacts with NCK2. Post-translationally, autophosphorylated in response to fibrillar collagen binding.

The protein localises to the cell membrane. The catalysed reaction is L-tyrosyl-[protein] + ATP = O-phospho-L-tyrosyl-[protein] + ADP + H(+). Its function is as follows. Tyrosine kinase that functions as a cell surface receptor for fibrillar collagen and regulates cell attachment to the extracellular matrix, remodeling of the extracellular matrix, cell migration, differentiation, survival and cell proliferation. Collagen binding triggers a signaling pathway that involves SRC and leads to the activation of MAP kinases. Regulates remodeling of the extracellular matrix by up-regulation of the matrix metalloproteinases MMP2, MMP7 and MMP9, and thereby facilitates cell migration and wound healing. Promotes smooth muscle cell migration, and thereby contributes to arterial wound healing. Also plays a role in tumor cell invasion. Phosphorylates PTPN11. Required for normal blastocyst implantation during pregnancy, for normal mammary gland differentiation and normal lactation. Required for normal ear morphology and normal hearing. The protein is Epithelial discoidin domain-containing receptor 1 (DDR1) of Pan troglodytes (Chimpanzee).